A 245-amino-acid chain; its full sequence is MESPTPQPAPGSATFMEGCKDSLPIVISYIPVAFAFGLNATRLGFSPLESVFFSCIIYAGASQFVITAMLAAGSSLWIAALTVMAMDVRHVLYGPSLRSRIIQRLQKSKTALWAFGLTDEVFAAATAKLVRNNRRWSENWMIGIAFSSWSSWVFGTVIGAFSGSGLLQGYPAVEAALGFMLPALFMSFLLASFQRKQSLCVTAALVGALAGVTLFSIPVAILAGIVCGCLTALIQAFWQGAPDEL.

Residues 1–24 (MESPTPQPAPGSATFMEGCKDSLP) lie on the Cytoplasmic side of the membrane. Residues 25–45 (IVISYIPVAFAFGLNATRLGF) form a helical membrane-spanning segment. Topologically, residues 46–63 (SPLESVFFSCIIYAGASQ) are periplasmic. A helical membrane pass occupies residues 64 to 84 (FVITAMLAAGSSLWIAALTVM). At 85 to 109 (AMDVRHVLYGPSLRSRIIQRLQKSK) the chain is on the cytoplasmic side. The helical transmembrane segment at 110–130 (TALWAFGLTDEVFAAATAKLV) threads the bilayer. At 131–140 (RNNRRWSENW) the chain is on the periplasmic side. A helical transmembrane segment spans residues 141–161 (MIGIAFSSWSSWVFGTVIGAF). Residues 162 to 172 (SGSGLLQGYPA) lie on the Cytoplasmic side of the membrane. Residues 173 to 193 (VEAALGFMLPALFMSFLLASF) traverse the membrane as a helical segment. At 194–205 (QRKQSLCVTAAL) the chain is on the periplasmic side. The chain crosses the membrane as a helical span at residues 206–226 (VGALAGVTLFSIPVAILAGIV). Residues 227 to 245 (CGCLTALIQAFWQGAPDEL) are Cytoplasmic-facing.

The protein belongs to the AzlC family.

The protein localises to the cell inner membrane. This chain is Inner membrane protein YgaZ (ygaZ), found in Escherichia coli (strain K12).